We begin with the raw amino-acid sequence, 766 residues long: Lanosterol synthase ERG7 (766 aa).

A disordered region spans residues 1 to 47; sequence MVANSTGRDASALKSRKRAADSESEPLLKQGQPFPKQPRIGSELDKT. The PFTB 1 repeat unit spans residues 148-190; that stretch reads ATAIYNYISARAHPEDGGWGLHIEGESSVFGTLMNYVALRLVG. Catalysis depends on aspartate 482, which acts as the Proton donor. PFTB repeat units lie at residues 586–626 and 635–676; these read IRTA…KHIG and SRRG…VVQT.

Belongs to the terpene cyclase/mutase family.

It is found in the lipid droplet. It localises to the endoplasmic reticulum membrane. It catalyses the reaction (S)-2,3-epoxysqualene = lanosterol. Its pathway is terpene metabolism; lanosterol biosynthesis; lanosterol from farnesyl diphosphate: step 3/3. It functions in the pathway steroid metabolism; ergosterol biosynthesis. In terms of biological role, lanosterol synthase; part of the third module of ergosterol biosynthesis pathway that includes the late steps of the pathway. ERG7 catalyzes the cyclization of (S)-2,3 oxidosqualene to lanosterol, a reaction that forms the sterol core. The third module or late pathway involves the ergosterol synthesis itself through consecutive reactions that mainly occur in the endoplasmic reticulum (ER) membrane. Firstly, the squalene synthase ERG9 catalyzes the condensation of 2 farnesyl pyrophosphate moieties to form squalene, which is the precursor of all steroids. Squalene synthase is crucial for balancing the incorporation of farnesyl diphosphate (FPP) into sterol and nonsterol isoprene synthesis. Secondly, squalene is converted into lanosterol by the consecutive action of the squalene epoxidase ERG1 and the lanosterol synthase ERG7. Then, the delta(24)-sterol C-methyltransferase ERG6 methylates lanosterol at C-24 to produce eburicol. Eburicol is the substrate of the sterol 14-alpha demethylase encoded by CYP51A, CYP51B and CYP51C, to yield 4,4,24-trimethyl ergosta-8,14,24(28)-trienol. CYP51B encodes the enzyme primarily responsible for sterol 14-alpha-demethylation, and plays an essential role in ascospore formation. CYP51A encodes an additional sterol 14-alpha-demethylase, induced on ergosterol depletion and responsible for the intrinsic variation in azole sensitivity. The third CYP51 isoform, CYP51C, does not encode a sterol 14-alpha-demethylase, but is required for full virulence on host wheat ears. The C-14 reductase ERG24 then reduces the C14=C15 double bond which leads to 4,4-dimethylfecosterol. A sequence of further demethylations at C-4, involving the C-4 demethylation complex containing the C-4 methylsterol oxidases ERG25, the sterol-4-alpha-carboxylate 3-dehydrogenase ERG26 and the 3-keto-steroid reductase ERG27, leads to the production of fecosterol via 4-methylfecosterol. ERG28 has a role as a scaffold to help anchor ERG25, ERG26 and ERG27 to the endoplasmic reticulum. The C-8 sterol isomerase ERG2 then catalyzes the reaction which results in unsaturation at C-7 in the B ring of sterols and thus converts fecosterol to episterol. The sterol-C5-desaturases ERG3A and ERG3BB then catalyze the introduction of a C-5 double bond in the B ring to produce 5-dehydroepisterol. The C-22 sterol desaturases ERG5A and ERG5B further convert 5-dehydroepisterol into ergosta-5,7,22,24(28)-tetraen-3beta-ol by forming the C-22(23) double bond in the sterol side chain. Finally, ergosta-5,7,22,24(28)-tetraen-3beta-ol is substrate of the C-24(28) sterol reductase ERG4 to produce ergosterol. In Gibberella zeae (strain ATCC MYA-4620 / CBS 123657 / FGSC 9075 / NRRL 31084 / PH-1) (Wheat head blight fungus), this protein is Lanosterol synthase ERG7.